Here is a 335-residue protein sequence, read N- to C-terminus: Glyceraldehyde-3-phosphate dehydrogenase (335 aa).

NAD(+) is bound by residues 10–11 (RI), Asp31, Arg75, and Thr122. D-glyceraldehyde 3-phosphate contacts are provided by residues 152 to 154 (SCT) and Thr183. Cys153 (nucleophile) is an active-site residue. Asn184 contributes to the NAD(+) binding site. D-glyceraldehyde 3-phosphate contacts are provided by residues Arg198, 211 to 212 (TG), and Arg234. Asn318 serves as a coordination point for NAD(+).

Belongs to the glyceraldehyde-3-phosphate dehydrogenase family. Homotetramer.

It localises to the cytoplasm. It carries out the reaction D-glyceraldehyde 3-phosphate + phosphate + NAD(+) = (2R)-3-phospho-glyceroyl phosphate + NADH + H(+). Its pathway is carbohydrate degradation; glycolysis; pyruvate from D-glyceraldehyde 3-phosphate: step 1/5. In terms of biological role, catalyzes the oxidative phosphorylation of glyceraldehyde 3-phosphate (G3P) to 1,3-bisphosphoglycerate (BPG) using the cofactor NAD. The first reaction step involves the formation of a hemiacetal intermediate between G3P and a cysteine residue, and this hemiacetal intermediate is then oxidized to a thioester, with concomitant reduction of NAD to NADH. The reduced NADH is then exchanged with the second NAD, and the thioester is attacked by a nucleophilic inorganic phosphate to produce BPG. The protein is Glyceraldehyde-3-phosphate dehydrogenase (gap) of Borreliella burgdorferi (strain ATCC 35210 / DSM 4680 / CIP 102532 / B31) (Borrelia burgdorferi).